A 398-amino-acid chain; its full sequence is Streptopain (398 aa).

A signal peptide spans 1–27; sequence MNKKKLGIRLLSLLALGGFVLANPVFA. A propeptide spanning residues 28–145 is cleaved from the precursor; the sequence is DQNFARNEKE…TTYAGTAEIK (118 aa). Residue cysteine 192 is the Nucleophile of the active site. Position 192 is a cysteine methyl disulfide; in zymogen form (cysteine 192). Positions 282 and 339 each coordinate a protein. The Proton acceptor role is filled by histidine 340. The C-terminal active site loop stretch occupies residues 368-390; that stretch reads RLDALNPSALGTGGGAGGFNGYQ.

The protein belongs to the peptidase C10 family. Monomer. In terms of processing, the mature protease is derived from the precursor sequence by cleavage, either in cis via an autocatalytic mechanism, or in trans by mature SpeB or host proteases (trypsin, plasmin or subtilisin). Maturation can involve a number of protein cleavage intermediates. Mature SpeB probably plays the most important role in protein maturation in physiological conditions. Methylthiolation at Cys-192 of the inactive zymogen form is probably involved in the mechanism of secretion of the proteinase into the culture fluid.

It is found in the secreted. Its subcellular location is the host extracellular space. The protein localises to the host cytoplasm. The enzyme catalyses Preferential cleavage with hydrophobic residues at P2, P1 and P1'.. Its activity is regulated as follows. Synthesized as an inactive zymogen to protect the intracellular components of the bacteria from proteolytic activity during protein production. Once secreted into the extracellular milieu, cleaved into the active protease: maturation can be mediated in cis by autocatalytic cleavage, or in trans by mature SpeB or host proteases. Protease activity is strongly inhibited by zinc and copper, which prevent its maturation into an active protease: inhibition by metal ions may be required to prevent proteolysis of streptococcal proteins. In terms of biological role, cysteine protease that acts as a key streptococcal virulence factor by cleaving host proteins involved in immune response. Triggers inflammation by mediating cleavage of host proteins, which can both promote host pathogenesis by triggering sterile inflammation and/or restrict streptococcal infection, depending on host immune statue and infection site. Cleaves host gasdermin-A (GSDMA) in epithelial cells, promoting GSDMA activation and formation of gasdermin pores, triggering pyroptosis. Pyroptosis triggers the elimination of the infected skin cell, depriving the pathogen of its protective niche, while inducing an inflammatory response. This ultimately prevents bacterial penetration of the epithelial barrier and a subsequent systemic dissemination of the pathogen. Also mediates cleavage of the cytokine precursor interleukin-1 beta (IL1B) to its mature form, resulting in inflammation and septic shock. SpeB-mediated maturation of IL1B plays a dual role depending on infection site: while IL1B inflammatory response prevents bacterial growth during invasive skin infections, it promotes streptococcal infection of the nasopharynx by disrupting colonization resistance mediated by the microbiota. Inhibits host autophagy be catalyzing cleavage and inactivation of key autophagy factors, such as CALCOCO2, NBR1 and SQSTM1. Cleaves and inhibits a number of complement factors, such as C2, C3-beta chain of C3, C4, C5 or SERPING1, thereby promoting evasion of host immunity. May also impair adaptive immunity by catalyzing cleavage and degradation of host immunoglobulins to promote immune system evasion; the relevance of this activity is however unsure in vivo. Catalyzes maturation and release of the peptide hormone bradykinin from the precursor Kininogen-1 (KNG1) to produce hypotension during septic shock. Also involved in bacterial translocation across the host epithelial barrier by mediating cleavage and degradation of host epithelial junction proteins, such as CDH1 and OCLN. Additionally, has been involved in degradation of fibronectin and vitronectin, two host extracellular matrix proteins involved in tissue integrity. Also able to catalyze cleavage and degradation of streptococcal proteins, such as C5a peptidase, EndoS or SmeZ. Degradation of streptococcal proteins is however strictly regulated to preserve integrity of other virulence factors. The polypeptide is Streptopain (speB) (Streptococcus pyogenes serotype M28 (strain MGAS6180)).